We begin with the raw amino-acid sequence, 239 residues long: Protein GrpE (239 aa).

Disordered regions lie at residues 1-60 (MIEN…SNND) and 208-239 (SMGP…SEDV). Residues 28 to 42 (SMQNSTTENDELSSQ) show a composition bias toward polar residues. Composition is skewed to basic and acidic residues over residues 43-53 (KTEEINTEELK) and 216-225 (SQQEVEKDTV). The span at 226–239 (EGDVDSDANTSEDV) shows a compositional bias: acidic residues.

Belongs to the GrpE family. Homodimer.

It localises to the cytoplasm. Its function is as follows. Participates actively in the response to hyperosmotic and heat shock by preventing the aggregation of stress-denatured proteins, in association with DnaK and GrpE. It is the nucleotide exchange factor for DnaK and may function as a thermosensor. Unfolded proteins bind initially to DnaJ; upon interaction with the DnaJ-bound protein, DnaK hydrolyzes its bound ATP, resulting in the formation of a stable complex. GrpE releases ADP from DnaK; ATP binding to DnaK triggers the release of the substrate protein, thus completing the reaction cycle. Several rounds of ATP-dependent interactions between DnaJ, DnaK and GrpE are required for fully efficient folding. This chain is Protein GrpE, found in Prochlorococcus marinus (strain MIT 9301).